A 335-amino-acid chain; its full sequence is Beta-ketoacyl-[acyl-carrier-protein] synthase III 3 (335 aa).

Residues cysteine 114 and histidine 256 contribute to the active site. The tract at residues 257–261 (QANHR) is ACP-binding. Asparagine 286 is a catalytic residue.

Belongs to the thiolase-like superfamily. FabH family. Homodimer.

The protein localises to the cytoplasm. The enzyme catalyses malonyl-[ACP] + acetyl-CoA + H(+) = 3-oxobutanoyl-[ACP] + CO2 + CoA. It participates in lipid metabolism; fatty acid biosynthesis. Catalyzes the condensation reaction of fatty acid synthesis by the addition to an acyl acceptor of two carbons from malonyl-ACP. Catalyzes the first condensation reaction which initiates fatty acid synthesis and may therefore play a role in governing the total rate of fatty acid production. Possesses both acetoacetyl-ACP synthase and acetyl transacylase activities. Its substrate specificity determines the biosynthesis of branched-chain and/or straight-chain of fatty acids. The protein is Beta-ketoacyl-[acyl-carrier-protein] synthase III 3 of Streptomyces coelicolor (strain ATCC BAA-471 / A3(2) / M145).